Consider the following 462-residue polypeptide: UDP-N-acetylmuramate--L-alanine ligase (462 aa).

114-120 (GSHGKTT) is a binding site for ATP.

Belongs to the MurCDEF family.

It is found in the cytoplasm. The enzyme catalyses UDP-N-acetyl-alpha-D-muramate + L-alanine + ATP = UDP-N-acetyl-alpha-D-muramoyl-L-alanine + ADP + phosphate + H(+). Its pathway is cell wall biogenesis; peptidoglycan biosynthesis. Its function is as follows. Cell wall formation. This chain is UDP-N-acetylmuramate--L-alanine ligase, found in Brachyspira hyodysenteriae (strain ATCC 49526 / WA1).